We begin with the raw amino-acid sequence, 376 residues long: Beta-centractin (376 aa).

Methionine 1 is modified (N-acetylmethionine). Tyrosine 4 is modified (3'-nitrotyrosine).

It belongs to the actin family. ARP1 subfamily.

The protein resides in the cytoplasm. Its subcellular location is the cytoskeleton. It localises to the microtubule organizing center. The protein localises to the centrosome. Its function is as follows. Component of a multi-subunit complex involved in microtubule based vesicle motility. It is associated with the centrosome. The chain is Beta-centractin (ACTR1B) from Bos taurus (Bovine).